The primary structure comprises 433 residues: Ribosome biogenesis protein WDR12 homolog (433 aa).

Positions 21-102 (VEVFVVSYRH…ESVISIECIV (82 aa)) are ubiquitin-like (UBL) domain. WD repeat units lie at residues 114–151 (ALLD…LTSS), 153–194 (LHEE…SSTF), 203–242 (GHER…TSTV), 270–310 (GHKD…QINT), 312–351 (AAKK…GTLV), 357–397 (GHCG…TPLY), and 401–433 (GHSD…RRKM).

This sequence belongs to the WD repeat WDR12/YTM1 family.

It is found in the nucleus. The protein localises to the nucleolus. It localises to the nucleoplasm. In terms of biological role, required for maturation of ribosomal RNAs and formation of the large ribosomal subunit. The polypeptide is Ribosome biogenesis protein WDR12 homolog (Brugia malayi (Filarial nematode worm)).